The following is a 215-amino-acid chain: Adenylate kinase (215 aa).

Residue 10-15 coordinates ATP; sequence GAGKGT. An NMP region spans residues 30–59; the sequence is STGDMLRAAIKAGTPLGLEAKKIIDEGGLV. Residues T31, R36, 57 to 59, 85 to 88, and Q92 each bind AMP; these read GLV and GFPR. The segment at 122-159 is LID; sequence GRRVHLASGRTYHVTYNPPKTEGKDDVTGEDLIQRDDD. ATP is bound by residues R123 and 132–133; that span reads TY. AMP is bound by residues R156 and R167. Position 200 (Q200) interacts with ATP.

Belongs to the adenylate kinase family. Monomer.

It is found in the cytoplasm. It carries out the reaction AMP + ATP = 2 ADP. Its pathway is purine metabolism; AMP biosynthesis via salvage pathway; AMP from ADP: step 1/1. In terms of biological role, catalyzes the reversible transfer of the terminal phosphate group between ATP and AMP. Plays an important role in cellular energy homeostasis and in adenine nucleotide metabolism. This Neisseria gonorrhoeae (strain ATCC 700825 / FA 1090) protein is Adenylate kinase.